A 355-amino-acid chain; its full sequence is Protein RecA (355 aa).

An ATP-binding site is contributed by 67–74 (GPESSGKT).

The protein belongs to the RecA family.

Its subcellular location is the cytoplasm. Its function is as follows. Can catalyze the hydrolysis of ATP in the presence of single-stranded DNA, the ATP-dependent uptake of single-stranded DNA by duplex DNA, and the ATP-dependent hybridization of homologous single-stranded DNAs. It interacts with LexA causing its activation and leading to its autocatalytic cleavage. This Shewanella baltica (strain OS195) protein is Protein RecA.